The chain runs to 862 residues: DNA mismatch repair protein MutS (862 aa).

An ATP-binding site is contributed by 621–628; sequence GPNMGGKS.

Belongs to the DNA mismatch repair MutS family.

In terms of biological role, this protein is involved in the repair of mismatches in DNA. It is possible that it carries out the mismatch recognition step. This protein has a weak ATPase activity. In Vibrio cholerae serotype O1 (strain ATCC 39541 / Classical Ogawa 395 / O395), this protein is DNA mismatch repair protein MutS.